The primary structure comprises 191 residues: Holliday junction branch migration complex subunit RuvA (191 aa).

The interval Met1 to Thr64 is domain I. Residues Asp65–Ser145 form a domain II region. The interval Val146–Ser149 is flexible linker. The segment at Ser149–Lys191 is domain III.

This sequence belongs to the RuvA family. Homotetramer. Forms an RuvA(8)-RuvB(12)-Holliday junction (HJ) complex. HJ DNA is sandwiched between 2 RuvA tetramers; dsDNA enters through RuvA and exits via RuvB. An RuvB hexamer assembles on each DNA strand where it exits the tetramer. Each RuvB hexamer is contacted by two RuvA subunits (via domain III) on 2 adjacent RuvB subunits; this complex drives branch migration. In the full resolvosome a probable DNA-RuvA(4)-RuvB(12)-RuvC(2) complex forms which resolves the HJ.

The protein localises to the cytoplasm. Its function is as follows. The RuvA-RuvB-RuvC complex processes Holliday junction (HJ) DNA during genetic recombination and DNA repair, while the RuvA-RuvB complex plays an important role in the rescue of blocked DNA replication forks via replication fork reversal (RFR). RuvA specifically binds to HJ cruciform DNA, conferring on it an open structure. The RuvB hexamer acts as an ATP-dependent pump, pulling dsDNA into and through the RuvAB complex. HJ branch migration allows RuvC to scan DNA until it finds its consensus sequence, where it cleaves and resolves the cruciform DNA. The polypeptide is Holliday junction branch migration complex subunit RuvA (Anaplasma phagocytophilum (strain HZ)).